Here is a 278-residue protein sequence, read N- to C-terminus: Antiviral protein MAP (278 aa).

An N-terminal signal peptide occupies residues 1 to 28; that stretch reads MLTTTKVFFLLLTTWITWYAIVNPQSRA. Cysteines 64 and 248 form a disulfide. The active site involves Glu196.

It carries out the reaction Endohydrolysis of the N-glycosidic bond at one specific adenosine on the 28S rRNA.. In terms of biological role, inhibits viral infection of plants, and protein synthesis in vitro. The sequence is that of Antiviral protein MAP from Mirabilis jalapa (Garden four-o'clock).